We begin with the raw amino-acid sequence, 418 residues long: Histidine--tRNA ligase (418 aa).

Belongs to the class-II aminoacyl-tRNA synthetase family. As to quaternary structure, homodimer.

Its subcellular location is the cytoplasm. The enzyme catalyses tRNA(His) + L-histidine + ATP = L-histidyl-tRNA(His) + AMP + diphosphate + H(+). This Thermoanaerobacter sp. (strain X514) protein is Histidine--tRNA ligase.